A 102-amino-acid polypeptide reads, in one-letter code: Large ribosomal subunit protein bL21 (102 aa).

Belongs to the bacterial ribosomal protein bL21 family. Part of the 50S ribosomal subunit. Contacts protein L20.

This protein binds to 23S rRNA in the presence of protein L20. The sequence is that of Large ribosomal subunit protein bL21 from Sulfurimonas denitrificans (strain ATCC 33889 / DSM 1251) (Thiomicrospira denitrificans (strain ATCC 33889 / DSM 1251)).